Reading from the N-terminus, the 380-residue chain is Cytochrome b (380 aa).

Transmembrane regions (helical) follow at residues 34–54, 78–99, 114–134, and 179–199; these read FGSL…LLAM, WLIR…YLHI, WNTG…GYVL, and FFAL…IHLT. Heme b-binding residues include H84 and H98. Heme b contacts are provided by H183 and H197. Residue H202 coordinates a ubiquinone. 4 consecutive transmembrane segments (helical) span residues 227 to 247, 289 to 309, 321 to 341, and 348 to 368; these read IKDI…ALFS, LGGV…PFLH, FSQL…WVGS, and FIII…ILFP.

The protein belongs to the cytochrome b family. As to quaternary structure, the cytochrome bc1 complex contains 11 subunits: 3 respiratory subunits (MT-CYB, CYC1 and UQCRFS1), 2 core proteins (UQCRC1 and UQCRC2) and 6 low-molecular weight proteins (UQCRH/QCR6, UQCRB/QCR7, UQCRQ/QCR8, UQCR10/QCR9, UQCR11/QCR10 and a cleavage product of UQCRFS1). This cytochrome bc1 complex then forms a dimer. Requires heme b as cofactor.

The protein localises to the mitochondrion inner membrane. Its function is as follows. Component of the ubiquinol-cytochrome c reductase complex (complex III or cytochrome b-c1 complex) that is part of the mitochondrial respiratory chain. The b-c1 complex mediates electron transfer from ubiquinol to cytochrome c. Contributes to the generation of a proton gradient across the mitochondrial membrane that is then used for ATP synthesis. This chain is Cytochrome b (MT-CYB), found in Numida meleagris (Helmeted guineafowl).